The chain runs to 330 residues: Elongation factor Ts, mitochondrial (330 aa).

The N-terminal 16 residues, 1 to 16 (MYRNCRKAFTFSLRHY), are a transit peptide targeting the mitochondrion.

The protein belongs to the EF-Ts family.

Its subcellular location is the mitochondrion. In terms of biological role, associates with the EF-Tu.GDP complex and induces the exchange of GDP to GTP. It remains bound to the aminoacyl-tRNA.EF-Tu.GTP complex up to the GTP hydrolysis stage on the ribosome. The sequence is that of Elongation factor Ts, mitochondrial from Laccaria bicolor (strain S238N-H82 / ATCC MYA-4686) (Bicoloured deceiver).